The primary structure comprises 1493 residues: Sister chromatid cohesion protein 2 (1493 aa).

Phosphoserine; in mutant scc2-8A is present on S43. T67 is subject to Phosphothreonine. S74 is modified (phosphoserine; in mutant scc2-8A). 2 positions are modified to phosphoserine: S127 and S157. A disordered region spans residues 151-170 (SNAGNLSFNDNSSNKKTKTS). Residue S162 is modified to Phosphoserine; in mutant scc2-8A. S163 bears the Phosphoserine mark. Phosphothreonine is present on residues T231 and T236. Phosphoserine occurs at positions 305 and 320. T360 carries the phosphothreonine; in mutant scc2-8A modification. HEAT repeat units follow at residues 695 to 732 (NLYDPYLKLILSLLAKDKIKLRSTAIKCLSMLASKDKV), 734 to 771 (LSNPMVKETIHRRLNDSSASVKDAILDLVSINSSYFEF), 806 to 843 (TKVYVIARILMKIEDEEDNIIDMARLILLNRWILKVHE), and 1132 to 1169 (FNSRHVLHLLDKEFQSDQLDIKLVILESLYDLFLLEER). S753 bears the Phosphoserine mark. Phosphoserine; in mutant scc2-8A is present on S1179. S1182 carries the phosphoserine modification. At S1183 the chain carries Phosphoserine; in mutant scc2-8A. Residue S1185 is modified to Phosphoserine. The HEAT 5 repeat unit spans residues 1244-1281 (TNPSHSIPTVIALFASTSQYIRHVAYELLEDLFEKYET).

This sequence belongs to the SCC2/Nipped-B family. Interacts with SCC4. Interacts with the cohesin complex, which is composed of: the SMC1 and SMC3 heterodimer attached via their hinge domain, MCD1/SCC1 which link them, and IRR1/SCC3, which interacts with MCD1. In terms of processing, phosphorylated at alternative sites Ser-43, Ser-74, Ser-162, Thr-360, Ser-1179 and Ser-1183 when the principal phosphorylation sites Thr-67, Ser-127, Ser-157, Ser-163, Thr-231, Thr-236, Ser-305 and Ser-320 are mutated to alanines.

The protein resides in the nucleus. The protein localises to the chromosome. Its subcellular location is the centromere. Plays a structural role in chromatin and is involved in sister chromatid cohesion. Forms a complex with SCC4 required for the stable association of the cohesin complex with chromatin, which may act by hydrolyzing ATP from SMC1 and SMC3 heads. Binds to the nucleosome-free promoter regions of ribosomal protein genes and tRNA genes. Involved in transcriptional regulation by cooperating with the RSC complex to maintain nucleosome exhaustion at its binding sites. The sequence is that of Sister chromatid cohesion protein 2 (SCC2) from Saccharomyces cerevisiae (strain ATCC 204508 / S288c) (Baker's yeast).